A 333-amino-acid polypeptide reads, in one-letter code: Fructose-1,6-bisphosphatase class 1 (333 aa).

The Mg(2+) site is built by glutamate 89, aspartate 110, leucine 112, and aspartate 113. Residues 113–116 (DGSS), asparagine 206, tyrosine 239, 257–259 (YLY), and lysine 269 each bind substrate. A Mg(2+)-binding site is contributed by glutamate 275.

Belongs to the FBPase class 1 family. Homotetramer. It depends on Mg(2+) as a cofactor.

The protein localises to the cytoplasm. The catalysed reaction is beta-D-fructose 1,6-bisphosphate + H2O = beta-D-fructose 6-phosphate + phosphate. The protein operates within carbohydrate biosynthesis; gluconeogenesis. This chain is Fructose-1,6-bisphosphatase class 1, found in Sodalis glossinidius (strain morsitans).